A 35-amino-acid chain; its full sequence is Cecropin-B (35 aa).

Leucine amide is present on leucine 35.

It belongs to the cecropin family.

It is found in the secreted. Functionally, cecropins have lytic and antibacterial activity against several Gram-positive and Gram-negative bacteria. The protein is Cecropin-B of Antheraea pernyi (Chinese oak silk moth).